Reading from the N-terminus, the 185-residue chain is NOP protein chaperone 1 (185 aa).

Phosphoserine is present on residues Ser34, Ser66, and Ser177. The interval Ser121–Gln185 is disordered.

Interacts with NOP58, RUVBL1 and RUVBL2; the interactions are direct and NOPCHAP1 bridges the association of NOP58 with RUVBL1:RUVBL2 even in absence of snoRNAs. The interactions with RUVBL1 and RUVBL2 are disrupted upon ATP binding.

It is found in the nucleus. Client-loading PAQosome/R2TP complex cofactor that selects NOP58 to promote box C/D small nucleolar ribonucleoprotein (snoRNP) assembly. Acts as a bridge between NOP58 and the R2TP complex via RUVBL1:RUVBL2. This is NOP protein chaperone 1 from Mus musculus (Mouse).